Consider the following 172-residue polypeptide: uncharacterized protein (172 aa).

The span at 1 to 28 shows a compositional bias: low complexity; that stretch reads MAAAGVTAKAGGGTSAAAASLIRARSPA. The interval 1 to 172 is disordered; sequence MAAAGVTAKA…GGRRSGRDAG (172 aa). Over residues 58–68 the composition is skewed to basic residues; it reads PRRRSRARRGH. The segment covering 80 to 100 has biased composition (gly residues); sequence TVGGEGQASQIGGGGGGGGGR. The span at 129–138 shows a compositional bias: low complexity; that stretch reads PGLASSPGVA. Gly residues predominate over residues 139 to 165; that stretch reads PAGGSGGLWSGAGLCSGLGARGFPGGR.

This is an uncharacterized protein from Homo sapiens (Human).